The following is an 83-amino-acid chain: Cytochrome b559 subunit alpha (83 aa).

Residues 22-36 (VIHAVTLPAIFLAGF) form a helical membrane-spanning segment. Histidine 24 contributes to the heme binding site.

The protein belongs to the PsbE/PsbF family. As to quaternary structure, heterodimer of an alpha subunit and a beta subunit. PSII is composed of 1 copy each of membrane proteins PsbA, PsbB, PsbC, PsbD, PsbE, PsbF, PsbH, PsbI, PsbJ, PsbK, PsbL, PsbM, PsbT, PsbX, PsbY, PsbZ, Psb30/Ycf12, peripheral proteins PsbO, CyanoQ (PsbQ), PsbU, PsbV and a large number of cofactors. It forms dimeric complexes. The cofactor is heme b.

It is found in the cellular thylakoid membrane. In terms of biological role, this b-type cytochrome is tightly associated with the reaction center of photosystem II (PSII). PSII is a light-driven water:plastoquinone oxidoreductase that uses light energy to abstract electrons from H(2)O, generating O(2) and a proton gradient subsequently used for ATP formation. It consists of a core antenna complex that captures photons, and an electron transfer chain that converts photonic excitation into a charge separation. The polypeptide is Cytochrome b559 subunit alpha (Synechococcus sp. (strain RCC307)).